Here is a 243-residue protein sequence, read N- to C-terminus: Orotidine 5'-phosphate decarboxylase (243 aa).

Residues aspartate 19, lysine 41, 69–78 (DLKFFDIPAT), threonine 124, arginine 185, glutamine 194, glycine 214, and arginine 215 each bind substrate. Lysine 71 (proton donor) is an active-site residue.

The protein belongs to the OMP decarboxylase family. Type 1 subfamily. As to quaternary structure, homodimer.

It catalyses the reaction orotidine 5'-phosphate + H(+) = UMP + CO2. It functions in the pathway pyrimidine metabolism; UMP biosynthesis via de novo pathway; UMP from orotate: step 2/2. In terms of biological role, catalyzes the decarboxylation of orotidine 5'-monophosphate (OMP) to uridine 5'-monophosphate (UMP). The sequence is that of Orotidine 5'-phosphate decarboxylase from Xanthomonas campestris pv. campestris (strain B100).